Reading from the N-terminus, the 442-residue chain is tRNA modification GTPase MnmE (442 aa).

(6S)-5-formyl-5,6,7,8-tetrahydrofolate contacts are provided by arginine 27, glutamate 84, and lysine 124. Residues 221 to 366 enclose the TrmE-type G domain; the sequence is GLHVVIVGAP…LLDALQAFAE (146 aa). GTP is bound by residues 231–236, 250–256, and 275–278; these read NAGKSS, SKEAGTT, and DTAG. Mg(2+) is bound by residues serine 235 and threonine 256. Lysine 442 contributes to the (6S)-5-formyl-5,6,7,8-tetrahydrofolate binding site.

The protein belongs to the TRAFAC class TrmE-Era-EngA-EngB-Septin-like GTPase superfamily. TrmE GTPase family. Homodimer. Heterotetramer of two MnmE and two MnmG subunits. It depends on K(+) as a cofactor.

It is found in the cytoplasm. Functionally, exhibits a very high intrinsic GTPase hydrolysis rate. Involved in the addition of a carboxymethylaminomethyl (cmnm) group at the wobble position (U34) of certain tRNAs, forming tRNA-cmnm(5)s(2)U34. In Brucella canis (strain ATCC 23365 / NCTC 10854 / RM-666), this protein is tRNA modification GTPase MnmE.